A 245-amino-acid polypeptide reads, in one-letter code: E3 ubiquitin-protein ligase RNF138 (245 aa).

Position 2 is an N-acetylalanine (A2). The RING-type zinc finger occupies 18–58 (CPVCQEVLKTPVRTTACQHVFCRKCFLTAMRESGAHCPLCR). Zn(2+)-binding residues include C86, C89, H101, and C105. The segment at 86-105 (CRCCAKQIKFYRMRHHYKSC) adopts a C2HC RNF-type zinc-finger fold. The interval 125–154 (QDSVGNSNRSETSTSDNTETYQENTSSSGH) is disordered. The residue at position 142 (T142) is a Phosphothreonine. 2 consecutive C2H2-type zinc fingers follow at residues 157 to 180 (FKCPLCQESNFTRQRLLDHCNSNH) and 187 to 215 (VTCPICVSLPWGDPSQITRNFVSHLNQRH). The UIM domain occupies 225-243 (LQLDEETQYQTAVEESFQV).

As to quaternary structure, interacts with NLK. Interacts with XRCC5/Ku80. Interacts with RBBP8/CtIP. In terms of processing, auto-ubiquitinated.

Its subcellular location is the chromosome. The catalysed reaction is S-ubiquitinyl-[E2 ubiquitin-conjugating enzyme]-L-cysteine + [acceptor protein]-L-lysine = [E2 ubiquitin-conjugating enzyme]-L-cysteine + N(6)-ubiquitinyl-[acceptor protein]-L-lysine.. It participates in protein modification; protein ubiquitination. In terms of biological role, E3 ubiquitin-protein ligase involved in DNA damage response by promoting DNA resection and homologous recombination. Recruited to sites of double-strand breaks following DNA damage and specifically promotes double-strand break repair via homologous recombination. Two different, non-exclusive, mechanisms have been proposed. According to a report, regulates the choice of double-strand break repair by favoring homologous recombination over non-homologous end joining (NHEJ): acts by mediating ubiquitination of XRCC5/Ku80, leading to remove the Ku complex from DNA breaks, thereby promoting homologous recombination. According to another report, cooperates with UBE2Ds E2 ubiquitin ligases (UBE2D1, UBE2D2, UBE2D3 or UBE2D4) to promote homologous recombination by mediating ubiquitination of RBBP8/CtIP. Together with NLK, involved in the ubiquitination and degradation of TCF/LEF. Also exhibits auto-ubiquitination activity in combination with UBE2K. May act as a negative regulator in the Wnt/beta-catenin-mediated signaling pathway. The sequence is that of E3 ubiquitin-protein ligase RNF138 from Homo sapiens (Human).